The following is a 361-amino-acid chain: Peptide chain release factor 1 (361 aa).

N5-methylglutamine is present on Gln-237. Residues 287–297 (KQQKEQSDTRK) are compositionally biased toward basic and acidic residues. Positions 287–307 (KQQKEQSDTRKNLVGSGDRSE) are disordered.

It belongs to the prokaryotic/mitochondrial release factor family. Methylated by PrmC. Methylation increases the termination efficiency of RF1.

The protein resides in the cytoplasm. Its function is as follows. Peptide chain release factor 1 directs the termination of translation in response to the peptide chain termination codons UAG and UAA. The chain is Peptide chain release factor 1 from Francisella philomiragia subsp. philomiragia (strain ATCC 25017 / CCUG 19701 / FSC 153 / O#319-036).